The following is a 463-amino-acid chain: Chromosomal replication initiator protein DnaA (463 aa).

A domain I, interacts with DnaA modulators region spans residues 1 to 83 (MSTNQIILTD…LQLFQHYNNT (83 aa)). The tract at residues 83-124 (TIKSIEIITKELPGTTQTVTELPTKTFADIGSSELNSENIFS) is domain II. The interval 125–343 (TLDARFTFDN…GALNKVIAHS (219 aa)) is domain III, AAA+ region. Residues Gly-171, Gly-173, Lys-174, and Thr-175 each coordinate ATP. A domain IV, binds dsDNA region spans residues 344 to 463 (NFTLKEITLE…INLLMKILQN (120 aa)).

This sequence belongs to the DnaA family. As to quaternary structure, oligomerizes as a right-handed, spiral filament on DNA at oriC.

Its subcellular location is the cytoplasm. In terms of biological role, plays an essential role in the initiation and regulation of chromosomal replication. ATP-DnaA binds to the origin of replication (oriC) to initiate formation of the DNA replication initiation complex once per cell cycle. Binds the DnaA box (a 9 base pair repeat at the origin) and separates the double-stranded (ds)DNA. Forms a right-handed helical filament on oriC DNA; dsDNA binds to the exterior of the filament while single-stranded (ss)DNA is stabiized in the filament's interior. The ATP-DnaA-oriC complex binds and stabilizes one strand of the AT-rich DNA unwinding element (DUE), permitting loading of DNA polymerase. After initiation quickly degrades to an ADP-DnaA complex that is not apt for DNA replication. Binds acidic phospholipids. This chain is Chromosomal replication initiator protein DnaA, found in Rickettsia peacockii (strain Rustic).